The primary structure comprises 158 residues: Acetolactate synthase small subunit (158 aa).

One can recognise an ACT domain in the interval 4 to 79 (MIIAKLHNVT…DVIEVADITD (76 aa)).

It belongs to the acetolactate synthase small subunit family. As to quaternary structure, dimer of large and small chains.

The enzyme catalyses 2 pyruvate + H(+) = (2S)-2-acetolactate + CO2. The protein operates within amino-acid biosynthesis; L-isoleucine biosynthesis; L-isoleucine from 2-oxobutanoate: step 1/4. It functions in the pathway amino-acid biosynthesis; L-valine biosynthesis; L-valine from pyruvate: step 1/4. The chain is Acetolactate synthase small subunit (ilvH) from Lactococcus lactis subsp. lactis (strain IL1403) (Streptococcus lactis).